The following is a 438-amino-acid chain: Glutamyl-tRNA(Gln) amidotransferase subunit D (438 aa).

Positions 92–422 constitute an Asparaginase/glutaminase domain; that stretch reads PTITILGTGG…REAKKMMLTN (331 aa). Catalysis depends on residues threonine 102, threonine 178, aspartate 179, and lysine 256.

The protein belongs to the asparaginase 1 family. GatD subfamily. Heterodimer of GatD and GatE.

The enzyme catalyses L-glutamyl-tRNA(Gln) + L-glutamine + ATP + H2O = L-glutaminyl-tRNA(Gln) + L-glutamate + ADP + phosphate + H(+). In terms of biological role, allows the formation of correctly charged Gln-tRNA(Gln) through the transamidation of misacylated Glu-tRNA(Gln) in organisms which lack glutaminyl-tRNA synthetase. The reaction takes place in the presence of glutamine and ATP through an activated gamma-phospho-Glu-tRNA(Gln). The GatDE system is specific for glutamate and does not act on aspartate. This chain is Glutamyl-tRNA(Gln) amidotransferase subunit D, found in Pyrococcus furiosus (strain ATCC 43587 / DSM 3638 / JCM 8422 / Vc1).